The sequence spans 384 residues: 3,7-dimethylxanthine N-methyltransferase 2 (384 aa).

Residues tyrosine 18, cysteine 61, asparagine 66, aspartate 100, leucine 101, serine 139, phenylalanine 140, and cysteine 156 each coordinate S-adenosyl-L-homocysteine. Theobromine is bound at residue tyrosine 157. Residue cysteine 158 coordinates S-adenosyl-L-homocysteine. Theobromine-binding residues include histidine 160 and tryptophan 161. Residue asparagine 178 coordinates Mg(2+). Theobromine is bound at residue serine 237. Mg(2+) contacts are provided by aspartate 260, phenylalanine 262, and asparagine 263. Tyrosine 368 contacts theobromine.

This sequence belongs to the methyltransferase superfamily. Type-7 methyltransferase family. Requires Mg(2+) as cofactor. Highly expressed in developing endosperm. Detected in young leaves and flower buds. Present in immature fruits (grains), but barely in mature fruits.

It carries out the reaction 7-methylxanthine + S-adenosyl-L-methionine = theobromine + S-adenosyl-L-homocysteine + H(+). It catalyses the reaction theobromine + S-adenosyl-L-methionine = caffeine + S-adenosyl-L-homocysteine + H(+). The catalysed reaction is 1,7-dimethylxanthine + S-adenosyl-L-methionine = caffeine + S-adenosyl-L-homocysteine + H(+). It functions in the pathway alkaloid biosynthesis. In terms of biological role, involved in the biosynthesis of caffeine. Catalyzes the conversion of 7-methylxanthine (7mX) to theobromine and of theobromine to caffeine. Has 1-N-methylation activity. The chain is 3,7-dimethylxanthine N-methyltransferase 2 from Coffea arabica (Arabian coffee).